Consider the following 241-residue polypeptide: Ribonuclease 3 (241 aa).

Residues 8–137 form the RNase III domain; that stretch reads LTLLKNRLGI…LLGAVYLDQG (130 aa). E50 provides a ligand contact to Mg(2+). D54 is a catalytic residue. Positions 123 and 126 each coordinate Mg(2+). The active site involves E126. The DRBM domain maps to 164–233; it reads DYKTELQELV…AKKALMKSDL (70 aa). The interval 214–241 is disordered; the sequence is RSKKEAEQQAAKKALMKSDLGSACNHKK.

This sequence belongs to the ribonuclease III family. Homodimer. Mg(2+) serves as cofactor.

The protein resides in the cytoplasm. The enzyme catalyses Endonucleolytic cleavage to 5'-phosphomonoester.. Functionally, digests double-stranded RNA. Involved in the processing of primary rRNA transcript to yield the immediate precursors to the large and small rRNAs (23S and 16S). Processes some mRNAs, and tRNAs when they are encoded in the rRNA operon. Processes pre-crRNA and tracrRNA of type II CRISPR loci if present in the organism. This Pelotomaculum thermopropionicum (strain DSM 13744 / JCM 10971 / SI) protein is Ribonuclease 3.